We begin with the raw amino-acid sequence, 193 residues long: Molybdopterin synthase catalytic subunit (193 aa).

Substrate contacts are provided by residues 118–119 (HR), lysine 134, and 141–143 (KKE). The disordered stretch occupies residues 159–193 (DRTTTDGTTASSPAPATRPAKGGGCCGSKVRANES). A compositionally biased stretch (low complexity) spans 163–178 (TDGTTASSPAPATRPA).

Belongs to the MoaE family. MOCS2B subfamily. In terms of assembly, heterotetramer; composed of 2 small (MOCS2A) and 2 large (MOCS2B) subunits.

It is found in the cytoplasm. The catalysed reaction is 2 [molybdopterin-synthase sulfur-carrier protein]-C-terminal-Gly-aminoethanethioate + cyclic pyranopterin phosphate + H2O = molybdopterin + 2 [molybdopterin-synthase sulfur-carrier protein]-C-terminal Gly-Gly + 2 H(+). Its pathway is cofactor biosynthesis; molybdopterin biosynthesis. Catalytic subunit of the molybdopterin synthase complex, a complex that catalyzes the conversion of precursor Z into molybdopterin. Acts by mediating the incorporation of 2 sulfur atoms from thiocarboxylated MOCS2A into precursor Z to generate a dithiolene group. The protein is Molybdopterin synthase catalytic subunit of Oryza sativa subsp. indica (Rice).